A 224-amino-acid chain; its full sequence is Thiamine-phosphate synthase (224 aa).

4-amino-2-methyl-5-(diphosphooxymethyl)pyrimidine contacts are provided by residues 44–48 and Asn-79; that span reads QFREK. Residues Asp-80 and Asp-99 each coordinate Mg(2+). Position 117 (Ser-117) interacts with 4-amino-2-methyl-5-(diphosphooxymethyl)pyrimidine. Residue 143 to 145 participates in 2-[(2R,5Z)-2-carboxy-4-methylthiazol-5(2H)-ylidene]ethyl phosphate binding; that stretch reads TET. A 4-amino-2-methyl-5-(diphosphooxymethyl)pyrimidine-binding site is contributed by Lys-146. 2-[(2R,5Z)-2-carboxy-4-methylthiazol-5(2H)-ylidene]ethyl phosphate contacts are provided by residues Gly-175 and 195–196; that span reads IS.

It belongs to the thiamine-phosphate synthase family. Requires Mg(2+) as cofactor.

The catalysed reaction is 2-[(2R,5Z)-2-carboxy-4-methylthiazol-5(2H)-ylidene]ethyl phosphate + 4-amino-2-methyl-5-(diphosphooxymethyl)pyrimidine + 2 H(+) = thiamine phosphate + CO2 + diphosphate. It catalyses the reaction 2-(2-carboxy-4-methylthiazol-5-yl)ethyl phosphate + 4-amino-2-methyl-5-(diphosphooxymethyl)pyrimidine + 2 H(+) = thiamine phosphate + CO2 + diphosphate. The enzyme catalyses 4-methyl-5-(2-phosphooxyethyl)-thiazole + 4-amino-2-methyl-5-(diphosphooxymethyl)pyrimidine + H(+) = thiamine phosphate + diphosphate. The protein operates within cofactor biosynthesis; thiamine diphosphate biosynthesis; thiamine phosphate from 4-amino-2-methyl-5-diphosphomethylpyrimidine and 4-methyl-5-(2-phosphoethyl)-thiazole: step 1/1. Its function is as follows. Condenses 4-methyl-5-(beta-hydroxyethyl)thiazole monophosphate (THZ-P) and 2-methyl-4-amino-5-hydroxymethyl pyrimidine pyrophosphate (HMP-PP) to form thiamine monophosphate (TMP). This is Thiamine-phosphate synthase from Bacillus licheniformis (strain ATCC 14580 / DSM 13 / JCM 2505 / CCUG 7422 / NBRC 12200 / NCIMB 9375 / NCTC 10341 / NRRL NRS-1264 / Gibson 46).